A 114-amino-acid chain; its full sequence is uncharacterized protein (114 aa).

It localises to the mitochondrion. This is an uncharacterized protein from Arabidopsis thaliana (Mouse-ear cress).